A 321-amino-acid chain; its full sequence is Ribose import permease protein RbsC (321 aa).

Residues 1-22 (MTTQTVSGRRYFTKAWLMEQKS) are Cytoplasmic-facing. A helical membrane pass occupies residues 23-43 (LIALLVLIAIVSTLSPNFFTI). Topologically, residues 44–56 (NNLFNILQQTSVN) are periplasmic. A helical transmembrane segment spans residues 57 to 77 (AIMAVGMTLVILTSGIDLSVG). Residues 78 to 125 (SLLALTGAVAASIVGIEVNALVAVAAALALGAAIGAVTGVIVAKGRVQ) lie on the Cytoplasmic side of the membrane. A helical transmembrane segment spans residues 126–145 (AFIATLVMMLLLRGVTMVYT). Over 146-168 (NGSPVNTGFTENADLFGWFGIGR) the chain is Periplasmic. Residues 169-190 (PLGVPTPVWIMGIVFLAAWYML) form a helical membrane-spanning segment. Topologically, residues 191–220 (HHTRLGRYIYALGGNEAATRLSGINVNKIK) are cytoplasmic. A helical membrane pass occupies residues 221 to 240 (IIVYSLCGLLASLAGIIEVA). Topologically, residues 241–294 (RLSSAQPTAGTGYELDAIAAVVLGGTSLAGGKGRIVGTLIGALILGFLNNGLNL) are periplasmic. A helical membrane pass occupies residues 295-316 (LGVSSYYQMIVKAVVILLAVLV). At 317 to 321 (DNKKQ) the chain is on the cytoplasmic side.

Belongs to the binding-protein-dependent transport system permease family. AraH/RbsC subfamily. The complex is composed of an ATP-binding protein (RbsA), two transmembrane proteins (RbsC) and a solute-binding protein (RbsB).

The protein resides in the cell inner membrane. Part of the ABC transporter complex RbsABC involved in ribose import. Probably responsible for the translocation of the substrate across the membrane. The polypeptide is Ribose import permease protein RbsC (rbsC) (Escherichia coli O157:H7).